A 131-amino-acid chain; its full sequence is UPF0102 protein RPD_0400 (131 aa).

The protein belongs to the UPF0102 family.

The chain is UPF0102 protein RPD_0400 from Rhodopseudomonas palustris (strain BisB5).